We begin with the raw amino-acid sequence, 879 residues long: MKKLTSSEFRQMFLDFFKDHGHMIMPSASLIPQDDPTLLWINSGVATMKKYFDGSVVPKNHRITSSQKSIRTNDIENVGKTARHQTFFEMLGNFSVGDYFRDEAIPWAWEFLTSPKWLGLPKEKLYCTVYPKDVDSQRVWEKAGMPADHIVKLEDNFWDIGEGPCGPDTEIFYDRGQENNDVAEDDPENFPGGENARYLEIWNIVFSQYNHLPNGKYVDQPHKNIDTGMGLERVLSILQDAPTNFETDLFLPIIHATEEMTDGKKYGENKEDTTAFKIIADHVRAVSFAIADGALPSNSGRGYVLRRLIRRADLHGQRLGIKGAFLYKLVPVVGKIMQSHYPEVMDQRGFIENVIQNEEKRFQATLDTGLTLLDDLIDKAKKSDDKTISGKDAFKMFDTYGFPYELTFESAQDAGLKVDKKGFDAEMQAQKERARKARGDLQSMGRQDVTLMNIKDKSVFERDTYEEPHAKLLDIVVDDKLVDKADGEHATLVFDKTPFYAERGGQVADHGNIYDQDGELVAKVTDVQHAPNNQNLHFVDLILPMEKGKEYVLKIDKERREGLRHSHSATHLLHAALRQVLGEHTHQAGSLVDPDYLRFDFTAMEPMTPREIKSVEELVNQKIWEAIDVKTTITTPEEGEKMGALALFDGKYGDKVRVVQMGDFSSEFCGGTHCSNTNQIGIFKIISESAVGAGMRRIEAVTSKKAYEYLANRSSLLDDIQADVKATKPDNIIDKIDSLESDLHDSQKQVEALTKQINQAKAGQIFDDVKQAGDLTVIATVADVNGMNDLRELADNWKSGNKSDVLVLAAENDGKANMIISLGQKALDKGLKAGDLIKKVAPIFGGGGGGRPNMAQAGGKRPEGLNDAIKAVIEEISKN.

The Zn(2+) site is built by H567, H571, C669, and H673.

The protein belongs to the class-II aminoacyl-tRNA synthetase family. Zn(2+) is required as a cofactor.

The protein resides in the cytoplasm. It catalyses the reaction tRNA(Ala) + L-alanine + ATP = L-alanyl-tRNA(Ala) + AMP + diphosphate. Functionally, catalyzes the attachment of alanine to tRNA(Ala) in a two-step reaction: alanine is first activated by ATP to form Ala-AMP and then transferred to the acceptor end of tRNA(Ala). Also edits incorrectly charged Ser-tRNA(Ala) and Gly-tRNA(Ala) via its editing domain. The chain is Alanine--tRNA ligase from Lactobacillus helveticus (strain DPC 4571).